A 192-amino-acid chain; its full sequence is 7-methyl-GTP pyrophosphatase (192 aa).

Catalysis depends on aspartate 69, which acts as the Proton acceptor.

Belongs to the Maf family. YceF subfamily. A divalent metal cation is required as a cofactor.

The protein localises to the cytoplasm. The catalysed reaction is N(7)-methyl-GTP + H2O = N(7)-methyl-GMP + diphosphate + H(+). In terms of biological role, nucleoside triphosphate pyrophosphatase that hydrolyzes 7-methyl-GTP (m(7)GTP). May have a dual role in cell division arrest and in preventing the incorporation of modified nucleotides into cellular nucleic acids. In Pseudomonas aeruginosa (strain ATCC 15692 / DSM 22644 / CIP 104116 / JCM 14847 / LMG 12228 / 1C / PRS 101 / PAO1), this protein is 7-methyl-GTP pyrophosphatase.